The primary structure comprises 589 residues: Kelch-like protein 25 (589 aa).

Residues 46–114 (TDVTLWAGDR…AYSSRIAINE (69 aa)) enclose the BTB domain. The region spanning 149-250 (CLGMMLLSDA…LPSDCLQEAV (102 aa)) is the BACK domain. 6 Kelch repeats span residues 296 to 340 (TLLI…AIGC), 341 to 388 (KVYV…ELEN), 389 to 444 (CLYV…SAKL), 446 to 492 (LFVF…VLGS), 494 to 538 (IFIM…ASGN), and 539 to 585 (KLYV…STWK).

In terms of assembly, component of the BCR(KLHL25) E3 ubiquitin ligase complex, at least composed of CUL3, KLHL25 and RBX1.

It participates in protein modification; protein ubiquitination. Substrate-specific adapter of a BCR (BTB-CUL3-RBX1) E3 ubiquitin ligase complex involved in various processes, such as translation homeostasis and lipid synthesis. The BCR(KLHL25) ubiquitin ligase complex acts by mediating ubiquitination of hypophosphorylated EIF4EBP1 (4E-BP1): ubiquitination and subsequent degradation of hypophosphorylated EIF4EBP1 (4E-BP1) probably serves as a homeostatic mechanism to maintain translation and prevent eIF4E inhibition when eIF4E levels are low. The BCR(KLHL25) complex does not target EIF4EBP1 (4E-BP1) when it is hyperphosphorylated or associated with eIF4E. The BCR(KLHL25) complex also acts as a regulator of lipid synthesis by mediating ubiquitination and degradation of ACLY, thereby inhibiting lipid synthesis. BCR(KLHL25)-mediated degradation of ACLY promotes fatty acid oxidation and is required for differentiation of inducible regulatory T (iTreg) cells. The polypeptide is Kelch-like protein 25 (Homo sapiens (Human)).